Here is a 268-residue protein sequence, read N- to C-terminus: Putative sgc region protein SgcQ (268 aa).

Belongs to the BtpA family.

This chain is Putative sgc region protein SgcQ (sgcQ), found in Escherichia coli (strain K12).